Reading from the N-terminus, the 143-residue chain is MYNLKVKKLNDDAIIPNFAHKGDAGMDLYSIEEVVIPPGETKLIKTGICIELPTMTEAQVRPRSGLALKHSVTVLNTPGTIDEGYRGELKIILINHGKNDFKVEKHMKIAQMIVKPIYDINIEEVKELSDSERGKGGFGSTGF.

Residues 63 to 65, N76, 80 to 82, and K90 contribute to the substrate site; these read RSG and TID.

The protein belongs to the dUTPase family. It depends on Mg(2+) as a cofactor.

It catalyses the reaction dUTP + H2O = dUMP + diphosphate + H(+). It participates in pyrimidine metabolism; dUMP biosynthesis; dUMP from dCTP (dUTP route): step 2/2. This enzyme is involved in nucleotide metabolism: it produces dUMP, the immediate precursor of thymidine nucleotides and it decreases the intracellular concentration of dUTP so that uracil cannot be incorporated into DNA. This is Deoxyuridine 5'-triphosphate nucleotidohydrolase from Clostridioides difficile (Peptoclostridium difficile).